The sequence spans 207 residues: dTTP/UTP pyrophosphatase (207 aa).

Aspartate 87 functions as the Proton acceptor in the catalytic mechanism.

It belongs to the Maf family. YhdE subfamily. Requires a divalent metal cation as cofactor.

It localises to the cytoplasm. It carries out the reaction dTTP + H2O = dTMP + diphosphate + H(+). It catalyses the reaction UTP + H2O = UMP + diphosphate + H(+). In terms of biological role, nucleoside triphosphate pyrophosphatase that hydrolyzes dTTP and UTP. May have a dual role in cell division arrest and in preventing the incorporation of modified nucleotides into cellular nucleic acids. This is dTTP/UTP pyrophosphatase from Ralstonia nicotianae (strain ATCC BAA-1114 / GMI1000) (Ralstonia solanacearum).